Here is a 650-residue protein sequence, read N- to C-terminus: 1-deoxy-D-xylulose-5-phosphate synthase 2 (650 aa).

Thiamine diphosphate-binding positions include His-79 and 120-122; that span reads AHS. Asp-151 contacts Mg(2+). Residues 152–153, Asn-180, Tyr-289, and Glu-371 each bind thiamine diphosphate; that span reads GS. Asn-180 contacts Mg(2+).

This sequence belongs to the transketolase family. DXPS subfamily. In terms of assembly, homodimer. The cofactor is Mg(2+). It depends on thiamine diphosphate as a cofactor.

The catalysed reaction is D-glyceraldehyde 3-phosphate + pyruvate + H(+) = 1-deoxy-D-xylulose 5-phosphate + CO2. The protein operates within metabolic intermediate biosynthesis; 1-deoxy-D-xylulose 5-phosphate biosynthesis; 1-deoxy-D-xylulose 5-phosphate from D-glyceraldehyde 3-phosphate and pyruvate: step 1/1. Functionally, catalyzes the acyloin condensation reaction between C atoms 2 and 3 of pyruvate and glyceraldehyde 3-phosphate to yield 1-deoxy-D-xylulose-5-phosphate (DXP). The sequence is that of 1-deoxy-D-xylulose-5-phosphate synthase 2 from Zymomonas mobilis subsp. mobilis (strain ATCC 31821 / ZM4 / CP4).